The primary structure comprises 135 residues: Sex-regulated protein janus-A (135 aa).

Substrate is bound at residue K37. H63 acts as the Proton acceptor in catalysis. 104–106 is a binding site for substrate; that stretch reads SQG.

Belongs to the janus family.

Functionally, janA and janB regulate somatic sex differentiation. The protein is Sex-regulated protein janus-A (janA) of Drosophila mauritiana (Fruit fly).